A 444-amino-acid chain; its full sequence is Signal recognition particle 54 kDa protein (444 aa).

Residues 102–109 (GVQGSGKT), 184–188 (DTAGR), and 244–247 (SKMD) contribute to the GTP site.

The protein belongs to the GTP-binding SRP family. SRP54 subfamily. In terms of assembly, part of the signal recognition particle protein translocation system, which is composed of SRP and FtsY. Archaeal SRP consists of a 7S RNA molecule of 300 nucleotides and two protein subunits: SRP54 and SRP19.

The protein localises to the cytoplasm. It carries out the reaction GTP + H2O = GDP + phosphate + H(+). Its function is as follows. Involved in targeting and insertion of nascent membrane proteins into the cytoplasmic membrane. Binds to the hydrophobic signal sequence of the ribosome-nascent chain (RNC) as it emerges from the ribosomes. The SRP-RNC complex is then targeted to the cytoplasmic membrane where it interacts with the SRP receptor FtsY. This chain is Signal recognition particle 54 kDa protein, found in Sulfolobus acidocaldarius (strain ATCC 33909 / DSM 639 / JCM 8929 / NBRC 15157 / NCIMB 11770).